The following is a 424-amino-acid chain: S-phase kinase-associated protein 2 (424 aa).

The interval 1–220 is mediates interaction with hepatitis C virus non-structural protein NS5A; the sequence is MHRKHLQEIP…LSLEGLRLSD (220 aa). The tract at residues 39–73 is disordered; sequence SALEKEEPDSENIPQELLSNLGHPESPPRKRLKSK. Position 64 is a phosphoserine (Ser64). The Nuclear localization signal signature appears at 67–73; it reads RKRLKSK. N6-acetyllysine; by p300/EP300 is present on residues Lys68 and Lys71. Ser72 and Ser75 each carry phosphoserine. Residues 94–140 form the F-box domain; sequence GVSWDSLPDELLLGIFSCLCLPELLKVSGVCKRWYRLASDESLWQTL. LRR repeat units follow at residues 151 to 176, 177 to 204, 210 to 234, 235 to 257, 258 to 284, 286 to 308, 309 to 330, 334 to 356, 359 to 378, and 380 to 401; these read VTGR…PLAE, HFSP…ILSQ, NLSL…NLVR, LNLS…SCSR, LDEL…VSET, TQLN…LVRR, CPNL…CFQE, LNYL…LLEL, IPTL…TLQL, and KEAL…RPTI. Ser179 carries the phosphoserine modification. Residues 402-424 form a mediates interaction with IFI27 region; sequence GNKKNQEIWGIKCRLTLQKPSCL.

In terms of assembly, part of a SCF(SKP2) complex consisting of CUL1, RBX1, SKP1 and SKP2. Component of a SCF(SKP2)-like complex containing CUL1, SKP1, TRIM21 and SKP2. Interacts directly with CUL1 and SKP1. Interacts with CKS1. Interacts with ASB2 which is the substrate-recognition component of a probable ECS E3 ubiquitin-protein ligase complex; ASB2 is likely to bridge the formation of dimeric E3-ubiquitin-protein ligase complexes composed of an ECS complex and an SCF(SKP2) complex. Interacts with the cyclin-A-CDK2 complex. Interacts with ORC1, phosphorylated CDT1, phosphorylated RBL2, ELF4, phosphorylated RAG2, FOXO1, UBP43, MYC, TOB1, TAL1 and KMT2A/MLL1. Interacts with TRIM21. Interacts with cyclin-E. Interacts with IFI27; promotes the ubiquitin-mediated proteasomal degradation of hepatitis C virus/HCV non-structural protein NS5A. Interacts with CARM1. As to quaternary structure, (Microbial infection) Interacts with hepatitis C virus/HCV non-structural protein NS5A; promotes the ubiquitin-mediated proteasomal degradation of NS5A. In terms of processing, phosphorylated on serine and threonine resudues in response to DNA damage, promoting 'Lys-63'-linked ubiquitination of NBN. Post-translationally, ubiquitinated by the APC/C complex, leading to its degradation by the proteasome. Deubiquitinated by USP13. Acetylation at Lys-68 and Lys-71 increases stability through impairment of APC/C-mediated proteolysis and promotes cytoplasmic retention. Deacetylated by SIRT3.

The protein resides in the cytoplasm. The protein localises to the nucleus. Its pathway is protein modification; protein ubiquitination. In terms of biological role, substrate recognition component of a SCF (SKP1-CUL1-F-box protein) E3 ubiquitin-protein ligase complex which mediates the ubiquitination and subsequent proteasomal degradation of target proteins involved in cell cycle progression, signal transduction and transcription. Specifically recognizes phosphorylated CDKN1B/p27kip and is involved in regulation of G1/S transition. Degradation of CDKN1B/p27kip also requires CKS1. Recognizes target proteins ORC1, CDT1, RBL2, KMT2A/MLL1, CDK9, RAG2, NBN, FOXO1, UBP43, YTHDF2, and probably MYC, TOB1 and TAL1. Degradation of TAL1 also requires STUB1. Recognizes CDKN1A in association with CCNE1 or CCNE2 and CDK2. Promotes ubiquitination and destruction of CDH1 in a CK1-dependent manner, thereby regulating cell migration. Following phosphorylation in response to DNA damage, mediates 'Lys-63'-linked ubiquitination of NBN, promoting ATM recruitment to DNA damage sites and DNA repair via homologous recombination. Through the ubiquitin-mediated proteasomal degradation of hepatitis C virus non-structural protein 5A, has an antiviral activity towards that virus. This is S-phase kinase-associated protein 2 (SKP2) from Homo sapiens (Human).